Here is an 81-residue protein sequence, read N- to C-terminus: Protein I5 homolog (81 aa).

Transmembrane regions (helical) follow at residues 8–28 (LITI…FSLV) and 53–73 (MEIF…AAYI).

This sequence belongs to the Chordopoxvirinae I5 family.

The protein localises to the virion membrane. The polypeptide is Protein I5 homolog (Vertebrata (FPV)).